Reading from the N-terminus, the 100-residue chain is Urease subunit gamma (100 aa).

The protein belongs to the urease gamma subunit family. Heterotrimer of UreA (gamma), UreB (beta) and UreC (alpha) subunits. Three heterotrimers associate to form the active enzyme.

The protein localises to the cytoplasm. The enzyme catalyses urea + 2 H2O + H(+) = hydrogencarbonate + 2 NH4(+). It functions in the pathway nitrogen metabolism; urea degradation; CO(2) and NH(3) from urea (urease route): step 1/1. Functionally, expression of the urease operon increases the likelihood of bacterial survival by contributing to acid resistance in vitro and in vivo in BALB/c mice. Y.enterocolitica enters the body via an oral path and must survive the acidic stomach before being able to colonize the intestinal mucosa. The chain is Urease subunit gamma from Yersinia enterocolitica.